A 383-amino-acid chain; its full sequence is Chaperone protein DnaJ (383 aa).

Positions aspartate 6–glycine 70 constitute a J domain. The segment at glycine 140–arginine 222 adopts a CR-type zinc-finger fold. Cysteine 153, cysteine 156, cysteine 170, cysteine 173, cysteine 196, cysteine 199, cysteine 210, and cysteine 213 together coordinate Zn(2+). 4 CXXCXGXG motif repeats span residues cysteine 153–glycine 160, cysteine 170–glycine 177, cysteine 196–glycine 203, and cysteine 210–glycine 217.

Belongs to the DnaJ family. As to quaternary structure, homodimer. Zn(2+) is required as a cofactor.

It is found in the cytoplasm. Functionally, participates actively in the response to hyperosmotic and heat shock by preventing the aggregation of stress-denatured proteins and by disaggregating proteins, also in an autonomous, DnaK-independent fashion. Unfolded proteins bind initially to DnaJ; upon interaction with the DnaJ-bound protein, DnaK hydrolyzes its bound ATP, resulting in the formation of a stable complex. GrpE releases ADP from DnaK; ATP binding to DnaK triggers the release of the substrate protein, thus completing the reaction cycle. Several rounds of ATP-dependent interactions between DnaJ, DnaK and GrpE are required for fully efficient folding. Also involved, together with DnaK and GrpE, in the DNA replication of plasmids through activation of initiation proteins. The polypeptide is Chaperone protein DnaJ (Latilactobacillus sakei subsp. sakei (strain 23K) (Lactobacillus sakei subsp. sakei)).